The chain runs to 391 residues: Probable inactive allantoicase (391 aa).

This sequence belongs to the allantoicase family.

Its function is as follows. The function of this enzyme is unclear as allantoicase activity is not known to exist in mammals. The chain is Probable inactive allantoicase from Homo sapiens (Human).